The chain runs to 419 residues: Ras association domain-containing protein 8 (419 aa).

A Ras-associating domain is found at 1–82 (MELKVWVDGV…VQLILRRTGP (82 aa)). Residues Ser-105 and Ser-129 each carry the phosphoserine modification. Position 131 is a phosphothreonine (Thr-131). Positions 372 to 399 (ASQADIETEAPFQSGSLKRPGSSRQLPS) are disordered. Residues 382–399 (PFQSGSLKRPGSSRQLPS) are compositionally biased toward polar residues. At Ser-387 the chain carries Phosphoserine.

The sequence is that of Ras association domain-containing protein 8 (Rassf8) from Mus musculus (Mouse).